The sequence spans 437 residues: Phosphomethylpyrimidine synthase (437 aa).

Residues Asn-69, Met-98, Tyr-127, His-163, 185-187, 226-229, and Glu-265 each bind substrate; these read SRG and DACR. His-269 provides a ligand contact to Zn(2+). Substrate is bound at residue Tyr-292. His-333 contributes to the Zn(2+) binding site. 3 residues coordinate [4Fe-4S] cluster: Cys-409, Cys-412, and Cys-416.

The protein belongs to the ThiC family. It depends on [4Fe-4S] cluster as a cofactor.

It catalyses the reaction 5-amino-1-(5-phospho-beta-D-ribosyl)imidazole + S-adenosyl-L-methionine = 4-amino-2-methyl-5-(phosphooxymethyl)pyrimidine + CO + 5'-deoxyadenosine + formate + L-methionine + 3 H(+). It participates in cofactor biosynthesis; thiamine diphosphate biosynthesis. Functionally, catalyzes the synthesis of the hydroxymethylpyrimidine phosphate (HMP-P) moiety of thiamine from aminoimidazole ribotide (AIR) in a radical S-adenosyl-L-methionine (SAM)-dependent reaction. The protein is Phosphomethylpyrimidine synthase of Clostridium botulinum (strain Langeland / NCTC 10281 / Type F).